A 321-amino-acid polypeptide reads, in one-letter code: ATP-dependent 6-phosphofructokinase (321 aa).

Position 12 (glycine 12) interacts with ATP. ADP is bound by residues 22 to 26 and 55 to 60; these read RGVVR and RYSVSD. ATP contacts are provided by residues 73-74 and 103-106; these read RF and GDGS. Aspartate 104 is a binding site for Mg(2+). 127-129 lines the substrate pocket; sequence TID. Aspartate 129 acts as the Proton acceptor in catalysis. Arginine 156 lines the ADP pocket. Substrate-binding positions include arginine 164 and 171–173; that span reads MGR. Residues 187–189, arginine 213, and 215–217 contribute to the ADP site; these read GCE and KRH. Residues glutamate 224, arginine 245, and 251 to 254 contribute to the substrate site; that span reads HIQR.

This sequence belongs to the phosphofructokinase type A (PFKA) family. ATP-dependent PFK group I subfamily. Prokaryotic clade 'B1' sub-subfamily. In terms of assembly, homotetramer. Mg(2+) is required as a cofactor.

It is found in the cytoplasm. The catalysed reaction is beta-D-fructose 6-phosphate + ATP = beta-D-fructose 1,6-bisphosphate + ADP + H(+). It functions in the pathway carbohydrate degradation; glycolysis; D-glyceraldehyde 3-phosphate and glycerone phosphate from D-glucose: step 3/4. Allosterically activated by ADP and other diphosphonucleosides, and allosterically inhibited by phosphoenolpyruvate. Its function is as follows. Catalyzes the phosphorylation of D-fructose 6-phosphate to fructose 1,6-bisphosphate by ATP, the first committing step of glycolysis. In Haemophilus influenzae (strain 86-028NP), this protein is ATP-dependent 6-phosphofructokinase.